Consider the following 272-residue polypeptide: MLLAIDVRNTHTVVGLLSGAKQHAKVVQQWRIRTESEVTADELALTIDGLIGEDSERLTGATGLSTVPSVLHEVRIMLEQYWPSVPHVLIEPGVRTGIPLLVDNPKEVGADRIVNCLAAYQQFAKAAIVVDFGSSICVDVVSAKGEFLGGAIAPGVQVSSDAAAARSAALRRVELARPRSVVGKNTVECMQAGAVFGFAGLVDGLVARIREDVKGFSADDDVAVVATGHTAPLLLPELHSVEHFDEHLTLNGLRLVFERNREAQRGRLKPAR.

Residue aspartate 6–valine 13 coordinates ATP. Residue glycine 109 to arginine 112 coordinates substrate. Residue aspartate 111 is the Proton acceptor of the active site. Aspartate 131 contacts K(+). Serine 134 contributes to the ATP binding site. Position 186 (threonine 186) interacts with substrate.

It belongs to the type III pantothenate kinase family. As to quaternary structure, homodimer. The cofactor is NH4(+). K(+) serves as cofactor.

The protein localises to the cytoplasm. The enzyme catalyses (R)-pantothenate + ATP = (R)-4'-phosphopantothenate + ADP + H(+). It functions in the pathway cofactor biosynthesis; coenzyme A biosynthesis; CoA from (R)-pantothenate: step 1/5. Its function is as follows. Catalyzes the phosphorylation of pantothenate (Pan), the first step in CoA biosynthesis. This is Type III pantothenate kinase from Mycobacterium ulcerans (strain Agy99).